The chain runs to 119 residues: Large ribosomal subunit protein bL20 (119 aa).

Belongs to the bacterial ribosomal protein bL20 family.

Binds directly to 23S ribosomal RNA and is necessary for the in vitro assembly process of the 50S ribosomal subunit. It is not involved in the protein synthesizing functions of that subunit. The sequence is that of Large ribosomal subunit protein bL20 from Bradyrhizobium sp. (strain ORS 278).